A 414-amino-acid chain; its full sequence is Histidine--tRNA ligase (414 aa).

It belongs to the class-II aminoacyl-tRNA synthetase family. As to quaternary structure, homodimer.

Its subcellular location is the cytoplasm. It catalyses the reaction tRNA(His) + L-histidine + ATP = L-histidyl-tRNA(His) + AMP + diphosphate + H(+). In Mycoplasma genitalium (strain ATCC 33530 / DSM 19775 / NCTC 10195 / G37) (Mycoplasmoides genitalium), this protein is Histidine--tRNA ligase (hisS).